The following is an 814-amino-acid chain: MPSTPLSAAVEALSEDAAQARHAELSRAIERANQLYYNEDAPELTDAEYDALRQELEAIEARFPALTGTTEASAGVGAKPSEKFAKVRHAVPMLSLGNAFADEDVDEFVARVRRFLNLPAEESVAFTAEPKIDGLSLSLRYEAGRLVTAATRGDGEVGENVTANALTVDDIPETLSGENIPEVLEVRGEVYLSHEDFAAINARQEAAGKPLFANPRNAAAGSLRQLDPAITASRPLRFFAYAWGEVSEPFTDTQSAVLERFRGWGLPVNPRTKLCRSAEEMIAHYRTIEAERAGLGYDIDGVVYKVDDLGFQRRLGFVSRAPRWALAHKFAAQEAITELLAIDINVGRTGSLNPLARLKPVTVGGVVVSNATLHNEGYVQGVGADGEPIREGRDIRVGDTVIVVRAGDVIPKVRDVVIEKRPADAVPYVFPDTCPACGSRAVRELNPRTKKLDAIRRCTGGLICPAQGVERLKHFVSRNGFDLEGFGQTYIEVLFEAGLVKQPADLFRLEFEPLKAAIVARRETLSAQRRSEGEPAPKKPTKKKGEEEDKAIKNLLASLDARRTIPLNRFLFALGIPQIGESTAKALAKRFPDMPSLMAALEAATREQAGRDWLELSALPRIGPGTRDRLFETLDPLPGEAMQDLSLGARLRGRLTPSQREAVLAHYGSEEKVDAALERAASQRPGDAYRLFADDGEIGPVATDSLIQFFSEPHNDAAVRALLEEVGTEPLATTTSAAAFAGKTVVFTGSLEKMTRSEAKATAERLGAKVSGSVSAKTDLVVAGPGAGSKLKDAEKHGVKVVSEDDWLAMLAEA.

NAD(+) is bound by residues 46–50 (DAEYD), 95–96 (SL), and Glu129. Residue Lys131 is the N6-AMP-lysine intermediate of the active site. NAD(+) is bound by residues Arg152, Glu189, Lys305, and Lys329. Residues Cys434, Cys437, Cys458, and Cys464 each coordinate Zn(2+). The disordered stretch occupies residues 525-548 (LSAQRRSEGEPAPKKPTKKKGEEE). The BRCT domain maps to 735–814 (TSAAAFAGKT…DDWLAMLAEA (80 aa)).

The protein belongs to the NAD-dependent DNA ligase family. LigA subfamily. Mg(2+) is required as a cofactor. Requires Mn(2+) as cofactor.

It catalyses the reaction NAD(+) + (deoxyribonucleotide)n-3'-hydroxyl + 5'-phospho-(deoxyribonucleotide)m = (deoxyribonucleotide)n+m + AMP + beta-nicotinamide D-nucleotide.. Functionally, DNA ligase that catalyzes the formation of phosphodiester linkages between 5'-phosphoryl and 3'-hydroxyl groups in double-stranded DNA using NAD as a coenzyme and as the energy source for the reaction. It is essential for DNA replication and repair of damaged DNA. The chain is DNA ligase from Methylorubrum extorquens (strain PA1) (Methylobacterium extorquens).